We begin with the raw amino-acid sequence, 214 residues long: MSGATKFIKCVTVGDGAVGKTCMLICYTSNKFPTDYIPTVFDNFSANVSVDGNIVNLGLWDTAGQEDYSRLRPLSYRGADIFVLAFSLISRASYENVLKKWMPELRRFAPNVPIVLVGTKLDLRDHRSYLADHPAASAITTAQGEELRKQIGAAAYIECSSKTQQNIKAVFDTAIKVVLQPPRRRGETTMARKKTRRSTGCSLKNLMCGSACVV.

14–21 (GDGAVGKT) is a binding site for GTP. Residues 36–44 (YIPTVFDNF) carry the Effector region motif. GTP-binding positions include 61–65 (DTAGQ) and 119–122 (TKLD).

It belongs to the small GTPase superfamily. Rho family. Post-translationally, may be palmitoylated.

The protein resides in the cytoplasm. It localises to the membrane. Functionally, inactive GDP-bound Rho GTPases reside in the cytosol, are found in a complex with Rho GDP-dissociation inhibitors (Rho GDIs), and are released from the GDI protein in order to translocate to membranes upon activation. The chain is Rac-like GTP-binding protein 2 (RAC2) from Oryza sativa subsp. japonica (Rice).